The chain runs to 311 residues: MSNLKAIRDRIQSVKNTKKITEAMRLVASAKVRRAQEQVLATRPFADRLAGVLYGLQGRLQFEDVECPLLQQREVKKVGLVVLAGNRGLCGAYNSNIIKRAEARAAELKAEGLEYSYLLVGRKAIQHFTRRDAPISQCRDNPEKTPDPQEVSSATDEILAWFESGAVDRVELIYTKFVSLISSRPVTQTLLPLDLQGLEAQDDEVFRLTSKGGKFDVTREKVSVEPEALAQDMIFEQDPVEILNALLPLFLTNQLLRAWQESTASELAARMTAMSNASDNASDLVKTLTLSYNKARQASITQELLEVVAGA.

C67 and C138 are joined by a disulfide.

It belongs to the ATPase gamma chain family. As to quaternary structure, F-type ATPases have 2 components, CF(1) - the catalytic core - and CF(0) - the membrane proton channel. CF(1) has five subunits: alpha(3), beta(3), gamma(1), delta(1), epsilon(1). CF(0) has three main subunits: a, b and c.

It is found in the cellular thylakoid membrane. Thiol-modulation by raising the activation threshold of the enzyme upon oxidation of the cysteines, thereby preventing wasteful ATP-hydrolysis. Its function is as follows. Produces ATP from ADP in the presence of a proton gradient across the membrane. The gamma chain is believed to be important in regulating ATPase activity and the flow of protons through the CF(0) complex. In Arthrospira platensis (Spirulina platensis), this protein is ATP synthase gamma chain (atpG).